A 473-amino-acid chain; its full sequence is MSLSRRRFIQATGATLAASALPLQAQAAETPVALPIPPLLESRRGQPLFLTLQRLHWTFAAGRRAATWGINGGYLGPTVRVYNGDDVNIIYNNRLTEPVAMTVSGLQVPGTLMGGAARMMSPGADWSPVLPIRQTAGTCWYHANTPNRMAPHIYNGLAGLWLVEDAVSKVLPLPNHYGVDDFPLIIQDKRLDNFGQPVYNPPASGGFLGDTLLVNGAQSPFVEVSRGWVRLRLLNASNSRCYQLQLSDGRAMHVVAGDQGFLPAPVPVIRLSLAPGERREILIDMSKGEEVAITAGEAAGLMDRVRGFFEPSSILVNTTVLTLKPTGLLPLVTDNLPMRLLSDQLIDGGISRTREFSLGGSTPDINGALWNMSRNDFQSLQGSFERWIVHTNTPQAFHIQGVAFLIKRVNGNTPLPEDQGWKDTVWVDNEVELLVWFPQVAPDHFPYLYYSQTLEMADRGAAGQFVVRPQSVG.

A signal peptide (tat-type signal) is located at residues 1–27; sequence MSLSRRRFIQATGATLAASALPLQAQA.

The protein belongs to the FtsP family. Predicted to be exported by the Tat system. The position of the signal peptide cleavage has not been experimentally proven.

The protein localises to the periplasm. Functionally, cell division protein that is required for growth during stress conditions. May be involved in protecting or stabilizing the divisomal assembly under conditions of stress. The chain is Cell division protein FtsP (ftsP) from Sodalis glossinidius (strain morsitans).